The following is a 278-amino-acid chain: Ras-related protein Rab-40B (278 aa).

The GTP site is built by Ser23, Gly26, and Lys27. A switch-I region spans residues 41–49; that stretch reads SPYGHPAGI. A Mg(2+)-binding site is contributed by Asp69. Positions 72, 126, and 127 each coordinate GTP. The segment at 72–88 is switch-II; sequence GQGRFCTIFRSYSRGAQ. The region spanning 175–228 is the SOCS box domain; that stretch reads LLRHGMDRLWRPSKVLSLQDLCCRAVVSCTPVHLVDKLPLPIALRSHLKSFSMA. Positions 242–278 are disordered; the sequence is SLTTSSTHKRSSLRKVKLVRPPQSPPKNCTRNSCKIS. A compositionally biased stretch (basic residues) spans 248–259; that stretch reads THKRSSLRKVKL. Polar residues predominate over residues 267–278; that stretch reads PKNCTRNSCKIS. Residue Cys270 is the site of S-palmitoyl cysteine attachment. Cys275 carries S-geranylgeranyl cysteine lipidation.

Belongs to the small GTPase superfamily. Rab family. In terms of assembly, component of the cullin-5-RING E3 ubiquitin-protein ligase complex (ECS(RAB40B) complex) composed of CUL5, Elongin BC (ELOB and ELOC), RNF7/RBX2 and RAB40B; RAB40B interaction with ECS complex is GTP-independent. Binds (GTP-bound) LIMA1; interaction promotes LIMA1 subcellular localization in lamellipodia during cell migration. Interacts (GTP-bound) with TKS5/SH3PXD2A (via PX domain); interaction promotes invadopodia-mediated extracellular matrix degradation. Mg(2+) serves as cofactor.

The protein resides in the cell membrane. Its subcellular location is the cytoplasm. It localises to the cytosol. The protein localises to the cell projection. It is found in the lamellipodium membrane. The protein resides in the ruffle. It carries out the reaction GTP + H2O = GDP + phosphate + H(+). Its pathway is protein modification; protein ubiquitination. With respect to regulation, regulated by guanine nucleotide exchange factors (GEFs) which promote the exchange of bound GDP for free GTP. Regulated by GTPase activating proteins (GAPs) which increase the GTP hydrolysis activity. Inhibited by GDP dissociation inhibitors (GDIs). Functionally, RAB40B small GTPase acts as substrate-recognition components of the ECS(RAB40B) E3 ubiquitin ligase complex which mediates the ubiquitination of target proteins. The Rab40 subfamily belongs to the Rab family that are key regulators of intracellular membrane trafficking, from the formation of transport vesicles to their fusion with membranes. Rabs cycle between an inactive GDP-bound form and an active GTP-bound form that is able to recruit to membranes different sets of downstream effectors directly responsible for vesicle formation, movement, tethering and fusion. As part of the ECS(RAB40B) complex, GTP-bound RAB40B promotes LIMA1/EPLIN ubiquitination and degradation, thereby regulating leading-edge actin dynamics during cell migration. As part of the ECS(RAB40B) complex, GTP-bound RAB40B also ubiquitinates RAP2A GTPase which promotes its localization to lamellipodia and activation to drive cell migration. The ECS(RAB40B) complex does not mediate canonical ubiquitin-dependent degradation of RAP2. RAB40B also binds TKS5/SH3PXD2A effector independently from ECS complex to promote invadopodia-mediated extracellular matrix degradation. The polypeptide is Ras-related protein Rab-40B (Homo sapiens (Human)).